The primary structure comprises 257 residues: MREKLTVIKVGGKIVEEEATLLQLLNDFAAISGHKVLVHGGGRSATKIAAQLGIESKMVNGRRITDAETLKVVTMVYGGLVNKNIVAGLQARGVNALGLTGADMNVIRSVKRPVKEVDYGFVGDVEKVDASLLADLIHKGVVPVMAPLTHDGQGNMLNTNADTIAGETAKALSALFDVTLVYCFEKKGVLRDENDDDSVIPEITRAEFEQYVADGVIQGGMIPKLENSFEAINAGVTEVVITLASAIKDNEGTRIKK.

Substrate is bound by residues 41–42 (GG), arginine 63, and asparagine 158.

The protein belongs to the acetylglutamate kinase family. ArgB subfamily.

The protein localises to the cytoplasm. The enzyme catalyses N-acetyl-L-glutamate + ATP = N-acetyl-L-glutamyl 5-phosphate + ADP. The protein operates within amino-acid biosynthesis; L-arginine biosynthesis; N(2)-acetyl-L-ornithine from L-glutamate: step 2/4. Catalyzes the ATP-dependent phosphorylation of N-acetyl-L-glutamate. This is Acetylglutamate kinase from Bacteroides thetaiotaomicron (strain ATCC 29148 / DSM 2079 / JCM 5827 / CCUG 10774 / NCTC 10582 / VPI-5482 / E50).